The following is a 459-amino-acid chain: Asparagine--tRNA ligase (459 aa).

This sequence belongs to the class-II aminoacyl-tRNA synthetase family. In terms of assembly, homodimer.

Its subcellular location is the cytoplasm. The catalysed reaction is tRNA(Asn) + L-asparagine + ATP = L-asparaginyl-tRNA(Asn) + AMP + diphosphate + H(+). This chain is Asparagine--tRNA ligase, found in Pelobacter propionicus (strain DSM 2379 / NBRC 103807 / OttBd1).